Here is a 414-residue protein sequence, read N- to C-terminus: Glutamyl-tRNA reductase (414 aa).

Substrate-binding positions include threonine 49 to arginine 52, serine 108, glutamate 113 to glutamine 115, and glutamine 119. Residue cysteine 50 is the Nucleophile of the active site. Position 188-193 (glycine 188–glycine 193) interacts with NADP(+).

This sequence belongs to the glutamyl-tRNA reductase family. As to quaternary structure, homodimer.

It catalyses the reaction (S)-4-amino-5-oxopentanoate + tRNA(Glu) + NADP(+) = L-glutamyl-tRNA(Glu) + NADPH + H(+). The protein operates within porphyrin-containing compound metabolism; protoporphyrin-IX biosynthesis; 5-aminolevulinate from L-glutamyl-tRNA(Glu): step 1/2. Its function is as follows. Catalyzes the NADPH-dependent reduction of glutamyl-tRNA(Glu) to glutamate 1-semialdehyde (GSA). This chain is Glutamyl-tRNA reductase, found in Francisella tularensis subsp. tularensis (strain WY96-3418).